We begin with the raw amino-acid sequence, 239 residues long: Orotidine 5'-phosphate decarboxylase (239 aa).

Residues Asp-15, Lys-37, 64–73 (DLKFHDIPNT), Thr-126, Arg-187, Gln-196, Gly-216, and Arg-217 each bind substrate. The active-site Proton donor is the Lys-66.

It belongs to the OMP decarboxylase family. Type 1 subfamily. As to quaternary structure, homodimer.

It catalyses the reaction orotidine 5'-phosphate + H(+) = UMP + CO2. The protein operates within pyrimidine metabolism; UMP biosynthesis via de novo pathway; UMP from orotate: step 2/2. Its function is as follows. Catalyzes the decarboxylation of orotidine 5'-monophosphate (OMP) to uridine 5'-monophosphate (UMP). The polypeptide is Orotidine 5'-phosphate decarboxylase (Geobacter metallireducens (strain ATCC 53774 / DSM 7210 / GS-15)).